The sequence spans 354 residues: Protein RecA (354 aa).

Residue 67-74 coordinates ATP; it reads GPESSGKT.

It belongs to the RecA family.

The protein localises to the cytoplasm. Functionally, can catalyze the hydrolysis of ATP in the presence of single-stranded DNA, the ATP-dependent uptake of single-stranded DNA by duplex DNA, and the ATP-dependent hybridization of homologous single-stranded DNAs. It interacts with LexA causing its activation and leading to its autocatalytic cleavage. In Haemophilus influenzae (strain 86-028NP), this protein is Protein RecA.